The sequence spans 289 residues: Energy-coupling factor transporter ATP-binding protein EcfA2 (289 aa).

The ABC transporter domain maps to 3–246 (IQAKKLNYTY…PEWLKNHHLN (244 aa)). Position 40–47 (40–47 (GHTGSGKS)) interacts with ATP.

The protein belongs to the ABC transporter superfamily. Energy-coupling factor EcfA family. As to quaternary structure, forms a stable energy-coupling factor (ECF) transporter complex composed of 2 membrane-embedded substrate-binding proteins (S component), 2 ATP-binding proteins (A component) and 2 transmembrane proteins (T component).

It localises to the cell membrane. Functionally, ATP-binding (A) component of a common energy-coupling factor (ECF) ABC-transporter complex. Unlike classic ABC transporters this ECF transporter provides the energy necessary to transport a number of different substrates. This is Energy-coupling factor transporter ATP-binding protein EcfA2 from Ligilactobacillus salivarius (strain UCC118) (Lactobacillus salivarius).